Here is a 131-residue protein sequence, read N- to C-terminus: MSMSDPIADMLTRIRNAQAVEKASVVMPSSKLKVAIAKVLKDEGYIDEFAVTEQGGKSTLTIGLKYYAGRPVIERLERVSKPGLRVYKGRNEIPQVMNGLGVAIISTPQGLMTDRRARATGVGGEVICYVA.

Belongs to the universal ribosomal protein uS8 family. In terms of assembly, part of the 30S ribosomal subunit. Contacts proteins S5 and S12.

Its function is as follows. One of the primary rRNA binding proteins, it binds directly to 16S rRNA central domain where it helps coordinate assembly of the platform of the 30S subunit. The sequence is that of Small ribosomal subunit protein uS8 from Ralstonia pickettii (strain 12J).